The sequence spans 134 residues: UPF0102 protein Dvul_2148 (134 aa).

It belongs to the UPF0102 family.

This chain is UPF0102 protein Dvul_2148, found in Nitratidesulfovibrio vulgaris (strain DP4) (Desulfovibrio vulgaris).